The following is a 418-amino-acid chain: Gamma-glutamyl phosphate reductase (418 aa).

The protein belongs to the gamma-glutamyl phosphate reductase family.

The protein localises to the cytoplasm. It carries out the reaction L-glutamate 5-semialdehyde + phosphate + NADP(+) = L-glutamyl 5-phosphate + NADPH + H(+). It participates in amino-acid biosynthesis; L-proline biosynthesis; L-glutamate 5-semialdehyde from L-glutamate: step 2/2. In terms of biological role, catalyzes the NADPH-dependent reduction of L-glutamate 5-phosphate into L-glutamate 5-semialdehyde and phosphate. The product spontaneously undergoes cyclization to form 1-pyrroline-5-carboxylate. The polypeptide is Gamma-glutamyl phosphate reductase (Desulfatibacillum aliphaticivorans).